Here is a 151-residue protein sequence, read N- to C-terminus: Large ribosomal subunit protein bL9 (151 aa).

It belongs to the bacterial ribosomal protein bL9 family.

Functionally, binds to the 23S rRNA. The sequence is that of Large ribosomal subunit protein bL9 from Prochlorococcus marinus (strain MIT 9515).